We begin with the raw amino-acid sequence, 268 residues long: MSSSKFEEVINKIINDSPPGELREVYDDLIKITSENSKNTILDAIENYNVQNCIPIEVNGNSVIISKYNKEGAKFFDPVNSVIFSVNHLERKGLDIEPYEFTHAKIEKGQLKELHDKLHEYLLQSFPGDVSFAVYPVPEEISKISIIIVSTKYNPNNFWNGHWRSSYIYDLETRELSGQISTQVHYYEDGNVSFQSGKDINQSNVDDVVCTIRDIETNFENDLDLSFFDLNEKQFKALRRRLPVTRSKINWGSAIGSYRLGKNAAEGK.

Ser-2 bears the N-acetylserine mark. A Phosphoserine modification is found at Ser-17.

It belongs to the F-actin-capping protein alpha subunit family. Component of the F-actin capping complex, composed of a heterodimer of an alpha and a beta subunit. Interacts with BSP1 (via C-terminus); leading to recruitment of the F-actin capping complex to actin cortical patches and the acomyosin contractile ring.

The protein resides in the cytoplasm. It localises to the cytoskeleton. It is found in the actin patch. Functionally, F-actin-capping proteins bind in a Ca(2+)-independent manner to the fast growing ends of actin filaments (barbed end) thereby blocking the exchange of subunits at these ends. Unlike other capping proteins (such as gelsolin and severin), these proteins do not sever actin filaments. The chain is F-actin-capping protein subunit alpha (CAP1) from Saccharomyces cerevisiae (strain ATCC 204508 / S288c) (Baker's yeast).